The following is a 335-amino-acid chain: Polyprenol dehydrogenase (335 aa).

4 residues coordinate NAD(+): Ile-55, Tyr-208, Lys-212, and Thr-245. The active-site Proton acceptor is Tyr-208.

It belongs to the short-chain dehydrogenases/reductases (SDR) family.

The protein resides in the lipid droplet. Its subcellular location is the secreted. The enzyme catalyses a di-trans,poly-cis-polyprenol + NAD(+) = a di-trans,poly-cis-polyprenal + NADH + H(+). It carries out the reaction a di-trans,poly-cis-polyprenol + NADP(+) = a di-trans,poly-cis-polyprenal + NADPH + H(+). It catalyses the reaction a di-trans,poly-cis-dolichol + NADP(+) = a di-trans,poly-cis-dolichal + NADPH + H(+). The catalysed reaction is a di-trans,poly-cis-dolichol + NAD(+) = a di-trans,poly-cis-dolichal + NADH + H(+). It participates in protein modification; protein glycosylation. Oxidoreductase that plays a key role in early steps of protein N-linked glycosylation by mediating two non-consecutive steps in dolichol biosynthesis. Acts both as a NAD(+)-dependent dehydrogenase and as a NADPH-dependent reductase during the conversion of polyprenol into dolichol. First catalyzes the NAD(+)-dependent dehydrogenation of polyprenol into polyprenal; polyprenal is then reduced into dolichal by SRD5A3. It then catalyzes the NADPH-dependent reduction of dolichal into dolichol. May also acts as a positive regulator of starvation-induced autophagy. This Mus musculus (Mouse) protein is Polyprenol dehydrogenase (Dhrsx).